Reading from the N-terminus, the 477-residue chain is ATP synthase subunit beta (477 aa).

163-170 is a binding site for ATP; sequence GGAGVGKT.

This sequence belongs to the ATPase alpha/beta chains family. In terms of assembly, F-type ATPases have 2 components, CF(1) - the catalytic core - and CF(0) - the membrane proton channel. CF(1) has five subunits: alpha(3), beta(3), gamma(1), delta(1), epsilon(1). CF(0) has four main subunits: a(1), b(1), b'(1) and c(9-12).

Its subcellular location is the cellular thylakoid membrane. The enzyme catalyses ATP + H2O + 4 H(+)(in) = ADP + phosphate + 5 H(+)(out). Produces ATP from ADP in the presence of a proton gradient across the membrane. The catalytic sites are hosted primarily by the beta subunits. The polypeptide is ATP synthase subunit beta (Synechococcus sp. (strain JA-2-3B'a(2-13)) (Cyanobacteria bacterium Yellowstone B-Prime)).